The sequence spans 107 residues: U1-lycotoxin-Ls1i (107 aa).

Residues 1–20 (MMKVLVVVALLVTLISYSSS) form the signal peptide. A propeptide spanning residues 21–41 (EGIDDLEADELLSLMANEQTR) is cleaved from the precursor. Cystine bridges form between Cys-44–Cys-59, Cys-51–Cys-68, Cys-58–Cys-86, and Cys-70–Cys-84.

Belongs to the neurotoxin 19 (CSTX) family. 04 (U1-Lctx) subfamily. Expressed by the venom gland.

The protein resides in the secreted. This Lycosa singoriensis (Wolf spider) protein is U1-lycotoxin-Ls1i.